A 1293-amino-acid chain; its full sequence is DNA-directed RNA polymerase subunit beta' (1293 aa).

The Zn(2+) site is built by cysteine 60, cysteine 62, cysteine 75, and cysteine 78. Residues aspartate 535, aspartate 537, and aspartate 539 each contribute to the Mg(2+) site. Positions 873, 950, 957, and 960 each coordinate Zn(2+).

It belongs to the RNA polymerase beta' chain family. The RNAP catalytic core consists of 2 alpha, 1 beta, 1 beta' and 1 omega subunit. When a sigma factor is associated with the core the holoenzyme is formed, which can initiate transcription. Mg(2+) is required as a cofactor. Zn(2+) serves as cofactor.

The enzyme catalyses RNA(n) + a ribonucleoside 5'-triphosphate = RNA(n+1) + diphosphate. DNA-dependent RNA polymerase catalyzes the transcription of DNA into RNA using the four ribonucleoside triphosphates as substrates. The chain is DNA-directed RNA polymerase subunit beta' from Cutibacterium acnes (strain DSM 16379 / KPA171202) (Propionibacterium acnes).